The primary structure comprises 188 residues: MLELNAKTTALVVIDLQEGILPFAGGPHTADEVVNRAGKLAAKFRASGQPVFLVRVGWSADYAEALKQPVDAPSPAKVLPENWWQHPAALGATDSDIEIIKRQWGAFYGTDLELQLRRRGIDTIVLCGISTNIGVESTARNAWELGFNLVIAEDACSAASAEQHNNSINHIYPRIARVRSVEEILNAL.

The protein belongs to the isochorismatase family.

This is an uncharacterized protein from Escherichia coli O157:H7.